A 363-amino-acid polypeptide reads, in one-letter code: UDP-N-acetylglucosamine--N-acetylmuramyl-(pentapeptide) pyrophosphoryl-undecaprenol N-acetylglucosamine transferase (363 aa).

UDP-N-acetyl-alpha-D-glucosamine-binding positions include 15-17 (TGG), N127, R163, S191, I244, 263-268 (ALTVSE), and Q288.

Belongs to the glycosyltransferase 28 family. MurG subfamily.

Its subcellular location is the cell inner membrane. The catalysed reaction is di-trans,octa-cis-undecaprenyl diphospho-N-acetyl-alpha-D-muramoyl-L-alanyl-D-glutamyl-meso-2,6-diaminopimeloyl-D-alanyl-D-alanine + UDP-N-acetyl-alpha-D-glucosamine = di-trans,octa-cis-undecaprenyl diphospho-[N-acetyl-alpha-D-glucosaminyl-(1-&gt;4)]-N-acetyl-alpha-D-muramoyl-L-alanyl-D-glutamyl-meso-2,6-diaminopimeloyl-D-alanyl-D-alanine + UDP + H(+). It participates in cell wall biogenesis; peptidoglycan biosynthesis. Its function is as follows. Cell wall formation. Catalyzes the transfer of a GlcNAc subunit on undecaprenyl-pyrophosphoryl-MurNAc-pentapeptide (lipid intermediate I) to form undecaprenyl-pyrophosphoryl-MurNAc-(pentapeptide)GlcNAc (lipid intermediate II). In Pectobacterium carotovorum subsp. carotovorum (strain PC1), this protein is UDP-N-acetylglucosamine--N-acetylmuramyl-(pentapeptide) pyrophosphoryl-undecaprenol N-acetylglucosamine transferase.